The following is a 424-amino-acid chain: Tyrosine--tRNA ligase (424 aa).

Residue Y37 coordinates L-tyrosine. Residues 42 to 51 carry the 'HIGH' region motif; it reads PTADSLHLGH. L-tyrosine-binding residues include Y175 and Q179. Positions 235–239 match the 'KMSKS' region motif; that stretch reads KFGKT. An ATP-binding site is contributed by K238. One can recognise an S4 RNA-binding domain in the interval 357-414; that stretch reads ADLQQALVNAELVPSRGQARTMIGSNAVTINGEKQSNAEYNFSDADRLFGRYTLLRRG.

This sequence belongs to the class-I aminoacyl-tRNA synthetase family. TyrS type 1 subfamily. In terms of assembly, homodimer.

It is found in the cytoplasm. It catalyses the reaction tRNA(Tyr) + L-tyrosine + ATP = L-tyrosyl-tRNA(Tyr) + AMP + diphosphate + H(+). Functionally, catalyzes the attachment of tyrosine to tRNA(Tyr) in a two-step reaction: tyrosine is first activated by ATP to form Tyr-AMP and then transferred to the acceptor end of tRNA(Tyr). This chain is Tyrosine--tRNA ligase, found in Serratia proteamaculans (strain 568).